A 408-amino-acid polypeptide reads, in one-letter code: Serine-rich antigen (408 aa).

2 tandem repeats follow at residues 209-214 (SVAQSE) and 230-235 (SVAQSE). The interval 209–235 (SVAQSEEHGSDSMSQSYNTCGSVAQSE) is 2 X 6 AA repeats of S-V-A-Q-S-E.

This sequence belongs to the mycobacterial PPE family.

The protein is Serine-rich antigen (sra) of Mycobacterium leprae (strain TN).